We begin with the raw amino-acid sequence, 1218 residues long: Coatomer subunit alpha-1 (1218 aa).

9 WD repeats span residues Thr7–Asp48, Glu49–Thr88, Gly91–Thr132, Gly133–Val172, Gly202–Val241, Gly246–Thr285, Arg288–Ser326, Ser363–Ala404, and Pro450–Gln489. Positions Asn857 to Glu882 are disordered. Acidic residues predominate over residues Phe862–Glu882.

As to quaternary structure, oligomeric complex that consists of at least the alpha, beta, beta', gamma, delta, epsilon and zeta subunits.

It is found in the cytoplasm. The protein resides in the golgi apparatus membrane. It localises to the cytoplasmic vesicle. Its subcellular location is the COPI-coated vesicle membrane. Its function is as follows. The coatomer is a cytosolic protein complex that binds to dilysine motifs and reversibly associates with Golgi non-clathrin-coated vesicles, which further mediate biosynthetic protein transport from the ER, via the Golgi up to the trans Golgi network. Coatomer complex is required for budding from Golgi membranes, and is essential for the retrograde Golgi-to-ER transport of dilysine-tagged proteins. This Oryza sativa subsp. japonica (Rice) protein is Coatomer subunit alpha-1.